Reading from the N-terminus, the 558-residue chain is MAGLRVLLCLGALLARQGSAGLQLLLNPSRANLSVRPNSEVLPGIHPDLEAVAIGEVHDNVTLRCGSASGSRGLVTWYRNDSEPAFLVSFNSSLPPAAPRFSLEDAGALRIEALRLEDDGNYTCQEVLNETHWFPVRLRVASGPAYVEVNISATGTLPNGTLYAARGSQVDFNCCSAAQPPPEVEWWIQTHSIPEFLGKNLSANSFTLMLMSQNLQGNYTCSATNVLSGRQRKVTTELLVYWPPPSAPQCSVEVSSESTTLELACNWDGGYPDPTFLWTEEPGGTIMGNSKLQTLSPAQLLEGKKFKCVGNHILGPESGASCVVKLSSPLLPSQPMRTCFVGGNVTLTCEVSGANPPARIQWLRNLTQPAIQPSSHYIITQQGQSSSLTIHNCSQDLDEGFYYCQAENLVGVRATNIWLSVKEPLNIGGIVGTVVSLLLLGLAVVSGLTLYYSPAFWWKGGSTFRGQDMGDVMVLVDSEEEEEEEEEEEEKEDVAEEVEQETNETEELPKGISKHGHIHRVTALVNGNLDRMGNGFQEFQDDSDGQQSGIVQEDGKPV.

Residues 1–20 form the signal peptide; the sequence is MAGLRVLLCLGALLARQGSA. Over 21-426 the chain is Extracellular; that stretch reads GLQLLLNPSR…IWLSVKEPLN (406 aa). Residues N32, N60, N121, N150, N159, and N218 are each glycosylated (N-linked (GlcNAc...) asparagine). 4 Ig-like C2-type domains span residues 37 to 140, 144 to 235, 248 to 327, and 332 to 420; these read PNSE…RLRV, PAYV…RKVT, PQCS…VKLS, and PSQP…IWLS. An intrachain disulfide couples C65 to C124. Cystine bridges form between C174/C221 and C265/C308. The N-linked (GlcNAc...) asparagine glycan is linked to N344. A disulfide bridge connects residues C349 and C404. A helical transmembrane segment spans residues 427 to 447; the sequence is IGGIVGTVVSLLLLGLAVVSG. The Cytoplasmic segment spans residues 448 to 558; it reads LTLYYSPAFW…GIVQEDGKPV (111 aa). The span at 477–506 shows a compositional bias: acidic residues; sequence DSEEEEEEEEEEEEKEDVAEEVEQETNETE. Disordered regions lie at residues 477–515 and 532–558; these read DSEEEEEEEEEEEEKEDVAEEVEQETNETEELPKGISKH and MGNGFQEFQDDSDGQQSGIVQEDGKPV.

Its subcellular location is the membrane. The protein is V-set and immunoglobulin domain-containing protein 10 (Vsig10) of Mus musculus (Mouse).